Consider the following 117-residue polypeptide: Large ribosomal subunit protein bL20c (117 aa).

Belongs to the bacterial ribosomal protein bL20 family.

The protein resides in the plastid. It is found in the chloroplast. Binds directly to 23S ribosomal RNA and is necessary for the in vitro assembly process of the 50S ribosomal subunit. It is not involved in the protein synthesizing functions of that subunit. The polypeptide is Large ribosomal subunit protein bL20c (Barbarea verna (Land cress)).